Consider the following 181-residue polypeptide: Acireductone dioxygenase (181 aa).

Fe(2+) is bound by residues histidine 97, histidine 99, glutamate 103, and histidine 141. Ni(2+) contacts are provided by histidine 97, histidine 99, glutamate 103, and histidine 141.

This sequence belongs to the acireductone dioxygenase (ARD) family. In terms of assembly, monomer. Fe(2+) serves as cofactor. Requires Ni(2+) as cofactor.

It catalyses the reaction 1,2-dihydroxy-5-(methylsulfanyl)pent-1-en-3-one + O2 = 3-(methylsulfanyl)propanoate + CO + formate + 2 H(+). The catalysed reaction is 1,2-dihydroxy-5-(methylsulfanyl)pent-1-en-3-one + O2 = 4-methylsulfanyl-2-oxobutanoate + formate + 2 H(+). It participates in amino-acid biosynthesis; L-methionine biosynthesis via salvage pathway; L-methionine from S-methyl-5-thio-alpha-D-ribose 1-phosphate: step 5/6. Its function is as follows. Catalyzes 2 different reactions between oxygen and the acireductone 1,2-dihydroxy-3-keto-5-methylthiopentene (DHK-MTPene) depending upon the metal bound in the active site. Fe-containing acireductone dioxygenase (Fe-ARD) produces formate and 2-keto-4-methylthiobutyrate (KMTB), the alpha-ketoacid precursor of methionine in the methionine recycle pathway. Ni-containing acireductone dioxygenase (Ni-ARD) produces methylthiopropionate, carbon monoxide and formate, and does not lie on the methionine recycle pathway. This chain is Acireductone dioxygenase, found in Pseudomonas aeruginosa (strain UCBPP-PA14).